The chain runs to 385 residues: Probable caffeine synthase 4 (385 aa).

S-adenosyl-L-homocysteine contacts are provided by Tyr18, Cys62, Asn67, Asp101, Leu102, Ser140, and Phe141. The caffeine site is built by Tyr158, Gln161, and Phe162. Asn179 serves as a coordination point for Mg(2+). Thr238 is a caffeine binding site. Residues Asp261, Phe263, and Asn264 each contribute to the Mg(2+) site. Tyr369 serves as a coordination point for caffeine.

It belongs to the methyltransferase superfamily. Type-7 methyltransferase family. Requires Mg(2+) as cofactor. In terms of tissue distribution, expressed in roots, stems, young and old leaves.

The protein operates within alkaloid biosynthesis. In terms of biological role, may be involved in the biosynthesis of caffeine. This is Probable caffeine synthase 4 from Coffea arabica (Arabian coffee).